Here is a 123-residue protein sequence, read N- to C-terminus: MLPLKFHEGGLIPVIVQDQKTREVLMMAYANEEAVRLTESTGSAHYYSRSRKKIWKKGEESGHFQKVGRILVDCDEDCLIYEVEQTGAACHTGYRTCFYRTLDGVTIGEKIFDPEKVYGKTGH.

Aspartate 73 contacts Mg(2+). Cysteine 74 lines the Zn(2+) pocket. Aspartate 75 and aspartate 77 together coordinate Mg(2+). Residues cysteine 90 and cysteine 97 each coordinate Zn(2+).

It belongs to the PRA-CH family. Homodimer. Mg(2+) serves as cofactor. The cofactor is Zn(2+).

Its subcellular location is the cytoplasm. The catalysed reaction is 1-(5-phospho-beta-D-ribosyl)-5'-AMP + H2O = 1-(5-phospho-beta-D-ribosyl)-5-[(5-phospho-beta-D-ribosylamino)methylideneamino]imidazole-4-carboxamide. It functions in the pathway amino-acid biosynthesis; L-histidine biosynthesis; L-histidine from 5-phospho-alpha-D-ribose 1-diphosphate: step 3/9. Its function is as follows. Catalyzes the hydrolysis of the adenine ring of phosphoribosyl-AMP. This chain is Phosphoribosyl-AMP cyclohydrolase, found in Methanoregula boonei (strain DSM 21154 / JCM 14090 / 6A8).